Here is a 33-residue protein sequence, read N- to C-terminus: Alpha-amanitin proprotein (33 aa).

A propeptide spanning residues 1–10 (MSDINATRLP) is cleaved from the precursor. The residue at position 11 (Ile-11) is a (3R,4R)-4,5-dihydroxyisoleucine; in form alpha-amanitin. A (3R,4S)-4-hydroxyisoleucine; in form gamma-amanitin modification is found at Ile-11. The cyclopeptide (Ile-Pro) cross-link spans 11–18 (IWGIGCNP). The 2'-cysteinyl-6'-hydroxytryptophan sulfoxide (Trp-Cys) cross-link spans 12–16 (WGIGC). Pro-18 carries the 4-hydroxyproline modification. The propeptide occupies 19 to 33 (SVGDEVTALLTSGEA).

This sequence belongs to the MSDIN fungal toxin family. Processed by the macrocyclase-peptidase enzyme POPB to yield a toxic cyclic decapeptide. POPB first removes 10 residues from the N-terminus. Conformational trapping of the remaining peptide forces the enzyme to release this intermediate rather than proceed to macrocyclization. The enzyme rebinds the remaining peptide in a different conformation and catalyzes macrocyclization of the N-terminal 8 residues.

Functionally, major toxin belonging to the bicyclic octapeptides amatoxins that acts by binding non-competitively to RNA polymerase II and greatly slowing the elongation of transcripts from target promoters. This chain is Alpha-amanitin proprotein, found in Amanita fuliginea (East Asian brown death cap).